The sequence spans 228 residues: 2,3-bisphosphoglycerate-dependent phosphoglycerate mutase (228 aa).

Substrate is bound by residues 8-15 (RHGQSEWN), 21-22 (TG), R60, 87-90 (ERHY), K98, 114-115 (RR), and 183-184 (GN). H9 functions as the Tele-phosphohistidine intermediate in the catalytic mechanism. The active-site Proton donor/acceptor is E87.

It belongs to the phosphoglycerate mutase family. BPG-dependent PGAM subfamily.

It catalyses the reaction (2R)-2-phosphoglycerate = (2R)-3-phosphoglycerate. The protein operates within carbohydrate degradation; glycolysis; pyruvate from D-glyceraldehyde 3-phosphate: step 3/5. Its function is as follows. Catalyzes the interconversion of 2-phosphoglycerate and 3-phosphoglycerate. The protein is 2,3-bisphosphoglycerate-dependent phosphoglycerate mutase of Staphylococcus epidermidis (strain ATCC 12228 / FDA PCI 1200).